Here is a 468-residue protein sequence, read N- to C-terminus: Uronate isomerase (468 aa).

Belongs to the metallo-dependent hydrolases superfamily. Uronate isomerase family.

It carries out the reaction D-glucuronate = D-fructuronate. The catalysed reaction is aldehydo-D-galacturonate = keto-D-tagaturonate. It functions in the pathway carbohydrate metabolism; pentose and glucuronate interconversion. In Lachnospira eligens (strain ATCC 27750 / DSM 3376 / VPI C15-48 / C15-B4) (Eubacterium eligens), this protein is Uronate isomerase.